The primary structure comprises 147 residues: uncharacterized protein (147 aa).

Residues 3–23 (APMVGMVVLVVTLGAAVLALS) form a helical membrane-spanning segment.

To M.tuberculosis Rv1312.

The protein localises to the membrane. This is an uncharacterized protein from Mycobacterium leprae (strain TN).